The following is a 450-amino-acid chain: Methionine aminopeptidase 2-2 (450 aa).

2 stretches are compositionally biased toward basic and acidic residues: residues 1–10 (MGAKISEDHP) and 30–39 (RGAHLSRDGD). A disordered region spans residues 1 to 100 (MGAKISEDHP…PPRVPLSELF (100 aa)). Positions 47 to 56 (GDDDDDDDEG) are enriched in acidic residues. Positions 69–86 (KKKKKKRKPKKKKAKKAT) are enriched in basic residues. His211 serves as a coordination point for substrate. Asp232, Asp243, and His302 together coordinate a divalent metal cation. Position 310 (His310) interacts with substrate. Residues Glu335 and Glu431 each coordinate a divalent metal cation.

It belongs to the peptidase M24A family. Methionine aminopeptidase eukaryotic type 2 subfamily. The cofactor is Co(2+). Requires Zn(2+) as cofactor. Mn(2+) is required as a cofactor. It depends on Fe(2+) as a cofactor.

Its subcellular location is the cytoplasm. It catalyses the reaction Release of N-terminal amino acids, preferentially methionine, from peptides and arylamides.. In terms of biological role, cotranslationally removes the N-terminal methionine from nascent proteins. The N-terminal methionine is often cleaved when the second residue in the primary sequence is small and uncharged (Met-Ala-, Cys, Gly, Pro, Ser, Thr, or Val). This Fusarium vanettenii (strain ATCC MYA-4622 / CBS 123669 / FGSC 9596 / NRRL 45880 / 77-13-4) (Fusarium solani subsp. pisi) protein is Methionine aminopeptidase 2-2.